Reading from the N-terminus, the 581-residue chain is Multidrug resistance-like ATP-binding protein MdlA (581 aa).

The region spanning 18–303 (YLGSIILLII…LAWMFNIVER (286 aa)) is the ABC transmembrane type-1 domain. 6 helical membrane-spanning segments follow: residues 23–43 (ILLI…GILI), 53–73 (GFEI…VYIL), 127–149 (VVFA…ISVL), 153–175 (ITQI…AILI), 247–267 (VIYL…GWLV), and 280–300 (FIMY…MFNI). The region spanning 337 to 571 (INIDMFFYPK…KNWYKSMYDH (235 aa)) is the ABC transporter domain. Residue 369 to 376 (GPTGAGKS) coordinates ATP.

This sequence belongs to the ABC transporter superfamily. Drug exporter-2 (TC 3.A.1.117) family.

The protein resides in the cell membrane. It carries out the reaction ATP + H2O + xenobioticSide 1 = ADP + phosphate + xenobioticSide 2.. In Buchnera aphidicola subsp. Schizaphis graminum (strain Sg), this protein is Multidrug resistance-like ATP-binding protein MdlA (mdlA).